Here is a 231-residue protein sequence, read N- to C-terminus: Membrane protein YknW (231 aa).

The next 5 membrane-spanning stretches (helical) occupy residues 38–58 (VWGPLLIVAAIIIVGAVLQSL), 93–113 (GAIIGGIAALFIAPLIYWLCV), 128–148 (LSLFVSLISSLGLLVNGIVAF), 171–191 (LASVLNTFEIFSIWSFVLLAI), and 205–225 (WISAIILFGILVVFSLFSGLI).

As to quaternary structure, interacts with a complex composed of YknX, YknY and YknZ.

The protein resides in the cell membrane. Functionally, part of an unusual four-component transporter, which is required for protection against the killing factor SdpC (sporulation-delaying protein). Has a role in the assembly of the YknXYZ complex. The protein is Membrane protein YknW (yknW) of Bacillus subtilis (strain 168).